We begin with the raw amino-acid sequence, 220 residues long: Charged multivesicular body protein 2a (220 aa).

Coiled coils occupy residues E12–Q53 and E198–R219. The segment at K196 to D220 is disordered. Positions A208–R218 match the MIT-interacting motif motif. The span at E211–D220 shows a compositional bias: basic and acidic residues.

It belongs to the SNF7 family. In terms of assembly, probable core component of the endosomal sorting required for transport complex III (ESCRT-III). ESCRT-III components are thought to multimerize to form a flat lattice on the perimeter membrane of the endosome.

It is found in the late endosome membrane. The protein resides in the cytoplasm. Its function is as follows. Probable core component of the endosomal sorting required for transport complex III (ESCRT-III) which is involved in multivesicular bodies (MVBs) formation and sorting of endosomal cargo proteins into MVBs. MVBs contain intraluminal vesicles (ILVs) that are generated by invagination and scission from the limiting membrane of the endosome and mostly are delivered to lysosomes enabling degradation of membrane proteins, such as stimulated growth factor receptors, lysosomal enzymes and lipids. The polypeptide is Charged multivesicular body protein 2a (chmp2a) (Xenopus laevis (African clawed frog)).